A 409-amino-acid polypeptide reads, in one-letter code: Glucose-1-phosphate adenylyltransferase (409 aa).

Alpha-D-glucose 1-phosphate is bound by residues Gly-168, 183-184 (EK), and Ser-201.

Belongs to the bacterial/plant glucose-1-phosphate adenylyltransferase family. In terms of assembly, homotetramer.

It carries out the reaction alpha-D-glucose 1-phosphate + ATP + H(+) = ADP-alpha-D-glucose + diphosphate. Its pathway is glycan biosynthesis; glycogen biosynthesis. Functionally, involved in the biosynthesis of ADP-glucose, a building block required for the elongation reactions to produce glycogen. Catalyzes the reaction between ATP and alpha-D-glucose 1-phosphate (G1P) to produce pyrophosphate and ADP-Glc. This is Glucose-1-phosphate adenylyltransferase from Corynebacterium glutamicum (strain R).